The following is a 379-amino-acid chain: Putative 8-amino-7-oxononanoate synthase (379 aa).

Position 18 (Arg-18) interacts with substrate. Gly-106–Tyr-107 contacts pyridoxal 5'-phosphate. Position 130 (His-130) interacts with substrate. Residues Ser-178, Asp-204 to His-207, and Thr-235 to Lys-238 contribute to the pyridoxal 5'-phosphate site. Lys-238 carries the N6-(pyridoxal phosphate)lysine modification. Thr-351 contributes to the substrate binding site.

The protein belongs to the class-II pyridoxal-phosphate-dependent aminotransferase family. BioF subfamily. Homodimer. The cofactor is pyridoxal 5'-phosphate.

The enzyme catalyses 6-carboxyhexanoyl-[ACP] + L-alanine + H(+) = (8S)-8-amino-7-oxononanoate + holo-[ACP] + CO2. It functions in the pathway cofactor biosynthesis; biotin biosynthesis. Catalyzes the decarboxylative condensation of pimeloyl-[acyl-carrier protein] and L-alanine to produce 8-amino-7-oxononanoate (AON), [acyl-carrier protein], and carbon dioxide. This is Putative 8-amino-7-oxononanoate synthase (bioF) from Haemophilus influenzae (strain 86-028NP).